The primary structure comprises 165 residues: Thiol peroxidase (165 aa).

Positions 18–165 (PQVGDNLAEF…DYDAALAALN (148 aa)) constitute a Thioredoxin domain. Cys60 (cysteine sulfenic acid (-SOH) intermediate) is an active-site residue. A disulfide bridge links Cys60 with Cys94.

This sequence belongs to the peroxiredoxin family. Tpx subfamily. As to quaternary structure, homodimer.

The enzyme catalyses a hydroperoxide + [thioredoxin]-dithiol = an alcohol + [thioredoxin]-disulfide + H2O. Thiol-specific peroxidase that catalyzes the reduction of hydrogen peroxide and organic hydroperoxides to water and alcohols, respectively. Plays a role in cell protection against oxidative stress by detoxifying peroxides. The polypeptide is Thiol peroxidase (Corynebacterium glutamicum (strain ATCC 13032 / DSM 20300 / JCM 1318 / BCRC 11384 / CCUG 27702 / LMG 3730 / NBRC 12168 / NCIMB 10025 / NRRL B-2784 / 534)).